The following is a 443-amino-acid chain: tRNA-2-methylthio-N(6)-dimethylallyladenosine synthase (443 aa).

The MTTase N-terminal domain maps to Lys-12–Ala-126. Residues Cys-21, Cys-57, Cys-89, Cys-162, Cys-166, and Cys-169 each contribute to the [4Fe-4S] cluster site. The region spanning Arg-148 to Ala-380 is the Radical SAM core domain. One can recognise a TRAM domain in the interval Lys-383–Ala-443.

This sequence belongs to the methylthiotransferase family. MiaB subfamily. As to quaternary structure, monomer. [4Fe-4S] cluster is required as a cofactor.

It is found in the cytoplasm. The catalysed reaction is N(6)-dimethylallyladenosine(37) in tRNA + (sulfur carrier)-SH + AH2 + 2 S-adenosyl-L-methionine = 2-methylsulfanyl-N(6)-dimethylallyladenosine(37) in tRNA + (sulfur carrier)-H + 5'-deoxyadenosine + L-methionine + A + S-adenosyl-L-homocysteine + 2 H(+). Catalyzes the methylthiolation of N6-(dimethylallyl)adenosine (i(6)A), leading to the formation of 2-methylthio-N6-(dimethylallyl)adenosine (ms(2)i(6)A) at position 37 in tRNAs that read codons beginning with uridine. In Novosphingobium aromaticivorans (strain ATCC 700278 / DSM 12444 / CCUG 56034 / CIP 105152 / NBRC 16084 / F199), this protein is tRNA-2-methylthio-N(6)-dimethylallyladenosine synthase.